Reading from the N-terminus, the 466-residue chain is Ribulose bisphosphate carboxylase large chain (466 aa).

At Lys5 the chain carries N6,N6,N6-trimethyllysine. Asn114 and Thr164 together coordinate substrate. The active-site Proton acceptor is Lys166. Lys168 contributes to the substrate binding site. Mg(2+) is bound by residues Lys192, Asp194, and Glu195. At Lys192 the chain carries N6-carboxylysine. His285 serves as the catalytic Proton acceptor. Residues Arg286, His318, and Ser370 each contribute to the substrate site.

The protein belongs to the RuBisCO large chain family. Type I subfamily. As to quaternary structure, heterohexadecamer of 8 large chains and 8 small chains; disulfide-linked. The disulfide link is formed within the large subunit homodimers. Mg(2+) is required as a cofactor. In terms of processing, the disulfide bond which can form in the large chain dimeric partners within the hexadecamer appears to be associated with oxidative stress and protein turnover.

It localises to the plastid. The protein resides in the chloroplast. It catalyses the reaction 2 (2R)-3-phosphoglycerate + 2 H(+) = D-ribulose 1,5-bisphosphate + CO2 + H2O. It carries out the reaction D-ribulose 1,5-bisphosphate + O2 = 2-phosphoglycolate + (2R)-3-phosphoglycerate + 2 H(+). Functionally, ruBisCO catalyzes two reactions: the carboxylation of D-ribulose 1,5-bisphosphate, the primary event in carbon dioxide fixation, as well as the oxidative fragmentation of the pentose substrate in the photorespiration process. Both reactions occur simultaneously and in competition at the same active site. This chain is Ribulose bisphosphate carboxylase large chain, found in Thespesia populnea (Portia tree).